A 327-amino-acid chain; its full sequence is Putative gluconeogenesis factor (327 aa).

This sequence belongs to the gluconeogenesis factor family.

It is found in the cytoplasm. In terms of biological role, required for morphogenesis under gluconeogenic growth conditions. The sequence is that of Putative gluconeogenesis factor (yjiF) from Lactococcus lactis subsp. lactis (strain IL1403) (Streptococcus lactis).